The chain runs to 130 residues: MTTKRKPYIRSMAPNWWQKLGFYRFYILRESTAVTTMWFSILLIYGLFALKGGTQSWHEFVTFLQNPVILLVNIITLLGALLHTKTWFELAPKAANIVIKGEKMGSGPVIKLLWAVTIIVTMIILGIALL.

3 consecutive transmembrane segments (helical) span residues 33 to 53 (AVTT…LKGG), 60 to 80 (FVTF…LLGA), and 109 to 129 (VIKL…GIAL).

Belongs to the FrdC family. As to quaternary structure, part of an enzyme complex containing four subunits: a flavoprotein (FrdA), an iron-sulfur protein (FrdB), and two hydrophobic anchor proteins (FrdC and FrdD).

Its subcellular location is the cell inner membrane. Its function is as follows. Two distinct, membrane-bound, FAD-containing enzymes are responsible for the catalysis of fumarate and succinate interconversion; fumarate reductase is used in anaerobic growth, and succinate dehydrogenase is used in aerobic growth. Anchors the catalytic components of the fumarate reductase complex to the cell inner membrane, binds quinones. This chain is Fumarate reductase subunit C, found in Photorhabdus laumondii subsp. laumondii (strain DSM 15139 / CIP 105565 / TT01) (Photorhabdus luminescens subsp. laumondii).